Consider the following 239-residue polypeptide: Ribose-5-phosphate isomerase A (239 aa).

Substrate contacts are provided by residues Ser40–Thr43, Asp96–Asp99, and Lys110–Gly113. Glu119 acts as the Proton acceptor in catalysis. Substrate is bound at residue Lys137.

This sequence belongs to the ribose 5-phosphate isomerase family. In terms of assembly, homodimer.

It catalyses the reaction aldehydo-D-ribose 5-phosphate = D-ribulose 5-phosphate. Its pathway is carbohydrate degradation; pentose phosphate pathway; D-ribose 5-phosphate from D-ribulose 5-phosphate (non-oxidative stage): step 1/1. Catalyzes the reversible conversion of ribose-5-phosphate to ribulose 5-phosphate. The polypeptide is Ribose-5-phosphate isomerase A (Methanococcus maripaludis (strain DSM 14266 / JCM 13030 / NBRC 101832 / S2 / LL)).